Here is a 311-residue protein sequence, read N- to C-terminus: Ribose-phosphate pyrophosphokinase (311 aa).

ATP is bound by residues 34–36 (DQE) and 93–94 (RQ). Mg(2+) contacts are provided by histidine 127 and aspartate 168. The active site involves lysine 191. D-ribose 5-phosphate is bound by residues arginine 193, aspartate 217, and 221 to 225 (DSGGT).

It belongs to the ribose-phosphate pyrophosphokinase family. Class I subfamily. In terms of assembly, homohexamer. It depends on Mg(2+) as a cofactor.

It localises to the cytoplasm. The catalysed reaction is D-ribose 5-phosphate + ATP = 5-phospho-alpha-D-ribose 1-diphosphate + AMP + H(+). It functions in the pathway metabolic intermediate biosynthesis; 5-phospho-alpha-D-ribose 1-diphosphate biosynthesis; 5-phospho-alpha-D-ribose 1-diphosphate from D-ribose 5-phosphate (route I): step 1/1. Its function is as follows. Involved in the biosynthesis of the central metabolite phospho-alpha-D-ribosyl-1-pyrophosphate (PRPP) via the transfer of pyrophosphoryl group from ATP to 1-hydroxyl of ribose-5-phosphate (Rib-5-P). This chain is Ribose-phosphate pyrophosphokinase, found in Mesorhizobium japonicum (strain LMG 29417 / CECT 9101 / MAFF 303099) (Mesorhizobium loti (strain MAFF 303099)).